We begin with the raw amino-acid sequence, 144 residues long: Prefoldin subunit alpha (144 aa).

Belongs to the prefoldin subunit alpha family. In terms of assembly, heterohexamer of two alpha and four beta subunits.

The protein localises to the cytoplasm. Functionally, molecular chaperone capable of stabilizing a range of proteins. Seems to fulfill an ATP-independent, HSP70-like function in archaeal de novo protein folding. The protein is Prefoldin subunit alpha of Methanosarcina barkeri (strain Fusaro / DSM 804).